We begin with the raw amino-acid sequence, 253 residues long: Major prion protein (253 aa).

The signal sequence occupies residues Met-1 to Cys-22. The interval Lys-23–Tyr-38 is interaction with ADGRG6. Positions Lys-23–Ser-230 are interaction with GRB2, ERI3 and SYN1. Residues Pro-26–Asn-108 form a disordered region. A run of 5 repeats spans residues Pro-51–Gln-59, Pro-60–Gln-67, Pro-68–Gln-75, Pro-76–Gln-83, and Pro-84–Gln-91. The segment at Pro-51–Gln-91 is 5 X 8 AA tandem repeats of P-H-G-G-G-W-G-Q. Over residues Gln-52–Thr-95 the composition is skewed to gly residues. His-61, Gly-62, Gly-63, His-69, Gly-70, Gly-71, His-77, Gly-78, Gly-79, His-85, Gly-86, and Gly-87 together coordinate Cu(2+). Cys-179 and Cys-214 form a disulfide bridge. Asn-181 and Asn-197 each carry an N-linked (GlcNAc...) asparagine glycan. The GPI-anchor amidated serine moiety is linked to residue Ser-230. The propeptide at Ser-231 to Gly-253 is removed in mature form.

This sequence belongs to the prion family. In terms of assembly, monomer and homodimer. Has a tendency to aggregate into amyloid fibrils containing a cross-beta spine, formed by a steric zipper of superposed beta-strands. Soluble oligomers may represent an intermediate stage on the path to fibril formation. Copper binding may promote oligomerization. Interacts with GRB2, APP, ERI3/PRNPIP and SYN1. Mislocalized cytosolically exposed PrP interacts with MGRN1; this interaction alters MGRN1 subcellular location and causes lysosomal enlargement. Interacts with KIAA1191. Interacts with ADGRG6. The glycosylation pattern (the amount of mono-, di- and non-glycosylated forms or glycoforms) seems to differ in normal and CJD prion.

The protein localises to the cell membrane. Its subcellular location is the golgi apparatus. In terms of biological role, its primary physiological function is unclear. May play a role in neuronal development and synaptic plasticity. May be required for neuronal myelin sheath maintenance. May promote myelin homeostasis through acting as an agonist for ADGRG6 receptor. May play a role in iron uptake and iron homeostasis. Soluble oligomers are toxic to cultured neuroblastoma cells and induce apoptosis (in vitro). Association with GPC1 (via its heparan sulfate chains) targets PRNP to lipid rafts. Also provides Cu(2+) or Zn(2+) for the ascorbate-mediated GPC1 deaminase degradation of its heparan sulfate side chains. This Homo sapiens (Human) protein is Major prion protein (PRNP).